The sequence spans 251 residues: Probable transcriptional regulatory protein BLA_1344 (251 aa).

The protein belongs to the TACO1 family.

The protein resides in the cytoplasm. This Bifidobacterium animalis subsp. lactis (strain AD011) protein is Probable transcriptional regulatory protein BLA_1344.